A 481-amino-acid chain; its full sequence is Glutamyl-tRNA(Gln) amidotransferase subunit A (481 aa).

Residues K79 and S154 each act as charge relay system in the active site. The interval 136–157 is disordered; the sequence is SAFGATKNPRNPEHVPGGSSGG. S178 serves as the catalytic Acyl-ester intermediate.

It belongs to the amidase family. GatA subfamily. As to quaternary structure, heterotrimer of A, B and C subunits.

The catalysed reaction is L-glutamyl-tRNA(Gln) + L-glutamine + ATP + H2O = L-glutaminyl-tRNA(Gln) + L-glutamate + ADP + phosphate + H(+). Allows the formation of correctly charged Gln-tRNA(Gln) through the transamidation of misacylated Glu-tRNA(Gln) in organisms which lack glutaminyl-tRNA synthetase. The reaction takes place in the presence of glutamine and ATP through an activated gamma-phospho-Glu-tRNA(Gln). This is Glutamyl-tRNA(Gln) amidotransferase subunit A from Lachnospira eligens (strain ATCC 27750 / DSM 3376 / VPI C15-48 / C15-B4) (Eubacterium eligens).